The primary structure comprises 203 residues: MIGRLRGIIIEKQPPLVLIEVGGVGYEVHMPMTCFYELPEAGQEAIVFTHFVVREDAQLLYGFNNKQERTLFKELIKTNGVGPKLALAILSGMSAQQFVNAVEREEVGALVKLPGIGKKTAERLIVEMKDRFKGLHGDLFTPAADLVLTSPASPATDDAEQEAVAALVALGYKPQEASRMVSKIARPDASSETLIREALRAAL.

Residues 1–64 (MIGRLRGIII…EDAQLLYGFN (64 aa)) form a domain I region. Residues 65–142 (NKQERTLFKE…KGLHGDLFTP (78 aa)) are domain II. A flexible linker region spans residues 143-154 (AADLVLTSPASP). Positions 155 to 203 (ATDDAEQEAVAALVALGYKPQEASRMVSKIARPDASSETLIREALRAAL) are domain III.

The protein belongs to the RuvA family. In terms of assembly, homotetramer. Forms an RuvA(8)-RuvB(12)-Holliday junction (HJ) complex. HJ DNA is sandwiched between 2 RuvA tetramers; dsDNA enters through RuvA and exits via RuvB. An RuvB hexamer assembles on each DNA strand where it exits the tetramer. Each RuvB hexamer is contacted by two RuvA subunits (via domain III) on 2 adjacent RuvB subunits; this complex drives branch migration. In the full resolvosome a probable DNA-RuvA(4)-RuvB(12)-RuvC(2) complex forms which resolves the HJ.

It localises to the cytoplasm. Functionally, the RuvA-RuvB-RuvC complex processes Holliday junction (HJ) DNA during genetic recombination and DNA repair, while the RuvA-RuvB complex plays an important role in the rescue of blocked DNA replication forks via replication fork reversal (RFR). RuvA specifically binds to HJ cruciform DNA, conferring on it an open structure. The RuvB hexamer acts as an ATP-dependent pump, pulling dsDNA into and through the RuvAB complex. HJ branch migration allows RuvC to scan DNA until it finds its consensus sequence, where it cleaves and resolves the cruciform DNA. The sequence is that of Holliday junction branch migration complex subunit RuvA from Shigella boydii serotype 18 (strain CDC 3083-94 / BS512).